We begin with the raw amino-acid sequence, 221 residues long: N-(5'-phosphoribosyl)anthranilate isomerase (221 aa).

The protein belongs to the TrpF family.

It catalyses the reaction N-(5-phospho-beta-D-ribosyl)anthranilate = 1-(2-carboxyphenylamino)-1-deoxy-D-ribulose 5-phosphate. Its pathway is amino-acid biosynthesis; L-tryptophan biosynthesis; L-tryptophan from chorismate: step 3/5. This is N-(5'-phosphoribosyl)anthranilate isomerase from Chlorobaculum parvum (strain DSM 263 / NCIMB 8327) (Chlorobium vibrioforme subsp. thiosulfatophilum).